Reading from the N-terminus, the 485-residue chain is Acyltransferase cm3D (485 aa).

His-169 (proton acceptor) is an active-site residue.

The protein belongs to the plant acyltransferase family. As to quaternary structure, monomer.

It functions in the pathway secondary metabolite biosynthesis. Functionally, acyltransferase; part of the gene cluster that mediates the biosynthesis of beauveriolides I and III, cyclodepsipeptides acting as inhibitors of the acyl-CoA:cholesterol acyltransferase. The HR-PKS cm3B initiates the biosynthesis of beauveriolides by iteratively catalyzing the formation of the linear polyketide chain. The ATP-dependent acetyl-CoA ligase cm3D converts the polyketide carboxylic acid to a CoA thioester which id shuttled to the first T domain in the NRPS cm3A by the acetyltransferase cm3C. Cm3A contains 13 domains and assembles the polyketide chain, L-phenylalanine, L-alanine, and D-leucine (or D-allo-isoleucine) to form beauveriolide I (or beauveriolide III). The production of both beauveriolides I and III suggests the substrate adaptability of cm3B, using different amino acids as substrates. This is Acyltransferase cm3D from Cordyceps militaris (strain CM01) (Caterpillar fungus).